We begin with the raw amino-acid sequence, 197 residues long: GTP cyclohydrolase-2 (197 aa).

49-53 (RVHSE) contacts GTP. Positions 54, 65, and 67 each coordinate Zn(2+). GTP contacts are provided by residues Gln-70, 92-94 (EGR), and Thr-114. Asp-126 serves as the catalytic Proton acceptor. Arg-128 serves as the catalytic Nucleophile. The GTP site is built by Thr-149 and Lys-154.

Belongs to the GTP cyclohydrolase II family. In terms of assembly, homodimer. Zn(2+) serves as cofactor.

It catalyses the reaction GTP + 4 H2O = 2,5-diamino-6-hydroxy-4-(5-phosphoribosylamino)-pyrimidine + formate + 2 phosphate + 3 H(+). Its pathway is cofactor biosynthesis; riboflavin biosynthesis; 5-amino-6-(D-ribitylamino)uracil from GTP: step 1/4. Catalyzes the conversion of GTP to 2,5-diamino-6-ribosylamino-4(3H)-pyrimidinone 5'-phosphate (DARP), formate and pyrophosphate. In Pectobacterium atrosepticum (strain SCRI 1043 / ATCC BAA-672) (Erwinia carotovora subsp. atroseptica), this protein is GTP cyclohydrolase-2.